We begin with the raw amino-acid sequence, 112 residues long: Large ribosomal subunit protein uL24 (112 aa).

The disordered stretch occupies residues 92–112; it reads ERDGKQKTVRVRVSKSTGKDL.

It belongs to the universal ribosomal protein uL24 family. As to quaternary structure, part of the 50S ribosomal subunit.

Functionally, one of two assembly initiator proteins, it binds directly to the 5'-end of the 23S rRNA, where it nucleates assembly of the 50S subunit. In terms of biological role, one of the proteins that surrounds the polypeptide exit tunnel on the outside of the subunit. This is Large ribosomal subunit protein uL24 from Kocuria rhizophila (strain ATCC 9341 / DSM 348 / NBRC 103217 / DC2201).